A 969-amino-acid chain; its full sequence is Leucine--tRNA ligase (969 aa).

Residues 46-56 (PYLNGVLHAGH) carry the 'HIGH' region motif. The 'KMSKS' region motif lies at 658-662 (KLSKS). An ATP-binding site is contributed by lysine 661.

Belongs to the class-I aminoacyl-tRNA synthetase family.

The protein resides in the cytoplasm. The enzyme catalyses tRNA(Leu) + L-leucine + ATP = L-leucyl-tRNA(Leu) + AMP + diphosphate. This Methanococcus aeolicus (strain ATCC BAA-1280 / DSM 17508 / OCM 812 / Nankai-3) protein is Leucine--tRNA ligase.